Here is a 495-residue protein sequence, read N- to C-terminus: Trimethylamine methyltransferase MttB1 (495 aa).

Position 334 (pyrrolysine 334) is a non-standard amino acid, pyrrolysine.

It belongs to the trimethylamine methyltransferase family. Can form a complex with MttC.

The catalysed reaction is Co(I)-[trimethylamine-specific corrinoid protein] + trimethylamine + H(+) = methyl-Co(III)-[trimethylamine-specific corrinoid protein] + dimethylamine. It participates in one-carbon metabolism; methanogenesis from trimethylamine. Its function is as follows. Catalyzes the transfer of a methyl group from trimethylamine to the corrinoid cofactor of MttC. In Methanosarcina acetivorans (strain ATCC 35395 / DSM 2834 / JCM 12185 / C2A), this protein is Trimethylamine methyltransferase MttB1 (mttB1).